The sequence spans 366 residues: Heat-inducible transcription repressor HrcA (366 aa).

Over residues 298–309 the composition is skewed to polar residues; that stretch reads SSGYGQSSTPSA. Residues 298-318 form a disordered region; it reads SSGYGQSSTPSANVEHEEYDT.

It belongs to the HrcA family.

Its function is as follows. Negative regulator of class I heat shock genes (grpE-dnaK-dnaJ and groELS operons). Prevents heat-shock induction of these operons. The protein is Heat-inducible transcription repressor HrcA of Bifidobacterium animalis subsp. lactis (strain AD011).